The following is a 669-amino-acid chain: Galactocerebrosidase (669 aa).

Positions 1–26 (MTAAAGSAGHAAVPLLLCALLVPGGA) are cleaved as a signal peptide. Substrate-binding residues include Thr93, Trp135, and Asn181. Catalysis depends on Glu182, which acts as the Proton donor/acceptor. Catalysis depends on Glu258, which acts as the Nucleophile. A disulfide bridge connects residues Cys271 and Cys378. Asn363 carries N-linked (GlcNAc...) asparagine glycosylation. Arg380 lines the substrate pocket. Asn387, Asn543, and Asn586 each carry an N-linked (GlcNAc...) asparagine glycan.

The protein belongs to the glycosyl hydrolase 59 family.

The protein localises to the lysosome. The catalysed reaction is a beta-D-galactosyl-(1&lt;-&gt;1')-N-acylsphing-4-enine + H2O = an N-acylsphing-4-enine + D-galactose. The enzyme catalyses beta-D-galactosyl-(1&lt;-&gt;1)-sphing-4-enine + H2O = sphing-4-enine + D-galactose. It catalyses the reaction a D-galactosylceramide + H2O = an N-acyl-sphingoid base + D-galactose. Functionally, hydrolyzes the galactose ester bonds of glycolipids such as galactosylceramide and galactosylsphingosine. Enzyme with very low activity responsible for the lysosomal catabolism of galactosylceramide, a major lipid in myelin, kidney and epithelial cells of small intestine and colon. The sequence is that of Galactocerebrosidase from Canis lupus familiaris (Dog).